Here is a 205-residue protein sequence, read N- to C-terminus: MMRTLITTHPLPLLLLPQQLLQLVQFQEVDTDFDFPEEDKKEEFEECLEKFFSTGPARPPTKEKVKRRVLIEPGMPLNHIEYCNHEIMGKNVYYKHRWVAEHYFLLMQYDELQKICYNRFVPCKNGIRKCNRSKGLVEGVYCNLTEAFEIPACKYESLYRKGYVLITCSWQNEMQKRIPHTINDLVEPPEHRSFLSEDGVFVISP.

Positions 1 to 26 (MMRTLITTHPLPLLLLPQQLLQLVQF) are cleaved as a signal peptide. Disulfide bonds link Cys-116-Cys-168 and Cys-123-Cys-130. N-linked (GlcNAc...) asparagine glycans are attached at residues Asn-131 and Asn-143.

Belongs to the pancreatic ribonuclease family. As to expression, at the mRNA level, widely expressed. At protein level, restricted to epididymis. Expressed in spermatozoa (sperm head and neck), with higher levels on ejaculated and epididymal sperm than on testicular sperm (at protein level). Expressed in the epithelial cells of the epididymal tubule (at protein level). Not detected in muscle.

The protein localises to the secreted. Its function is as follows. Does not exhibit any ribonuclease activity. The polypeptide is Inactive ribonuclease-like protein 9 (RNASE9) (Homo sapiens (Human)).